Here is a 64-residue protein sequence, read N- to C-terminus: MRPSFPLLLIMLLVCTAHHMVSGENAQSCTPEQQKTCKQYSCINPCCENNQCRCGCGILEGESK.

A signal peptide spans M1 to G23.

It belongs to the scoloptoxin-14 family. In terms of processing, contains 4 disulfide bonds. As to expression, expressed by the venom gland.

It is found in the secreted. This is U-scoloptoxin(14)-Er1a from Ethmostigmus rubripes (Giant centipede).